Consider the following 160-residue polypeptide: Thialysine N-epsilon-acetyltransferase (160 aa).

The region spanning Phe4–Asp159 is the N-acetyltransferase domain. Acetyl-CoA contacts are provided by residues Leu84 to Ile86, Arg92 to Arg97, Asn123 to Ala126, and Tyr130 to Val133.

The protein belongs to the acetyltransferase family. Homodimer.

It catalyses the reaction S-(2-aminoethyl)-L-cysteine + acetyl-CoA = S-(2-acetamidoethyl)-L-cysteine + CoA + H(+). The catalysed reaction is O-(2-aminoethyl)-L-serine + acetyl-CoA = O-(2-acetamidoethyl)-L-serine + CoA + H(+). It carries out the reaction S-(2-aminoethyl)-homocysteine + acetyl-CoA = S-(2-acetamidoethyl)-homocysteine + CoA + H(+). Functionally, catalyzes the N-acetylation of the amino acid thialysine (S-(2-aminoethyl)-L-cysteine), a L-lysine analog with the 4-methylene group substituted with a sulfur. Substrate specificity: thialysine &gt; O-(2-aminoethyl)-L-serine &gt; S-(2-aminoethyl)-D,L-homocysteine. Does not act on polyamines, such as spermidine and spermine, nor on diamines putrescine and cadaverine. The polypeptide is Thialysine N-epsilon-acetyltransferase (Caenorhabditis elegans).